A 278-amino-acid chain; its full sequence is Biotin synthase (278 aa).

A Radical SAM core domain is found at 1–227 (MQIMLCAISN…NAHIMVAGGR (227 aa)). Cysteine 16, cysteine 20, and cysteine 23 together coordinate [4Fe-4S] cluster. [2Fe-2S] cluster contacts are provided by cysteine 60, cysteine 95, and cysteine 153.

The protein belongs to the radical SAM superfamily. Biotin synthase family. Homodimer. The cofactor is [4Fe-4S] cluster. Requires [2Fe-2S] cluster as cofactor.

The catalysed reaction is (4R,5S)-dethiobiotin + (sulfur carrier)-SH + 2 reduced [2Fe-2S]-[ferredoxin] + 2 S-adenosyl-L-methionine = (sulfur carrier)-H + biotin + 2 5'-deoxyadenosine + 2 L-methionine + 2 oxidized [2Fe-2S]-[ferredoxin]. Its pathway is cofactor biosynthesis; biotin biosynthesis; biotin from 7,8-diaminononanoate: step 2/2. Catalyzes the conversion of dethiobiotin (DTB) to biotin by the insertion of a sulfur atom into dethiobiotin via a radical-based mechanism. The sequence is that of Biotin synthase from Campylobacter lari (strain RM2100 / D67 / ATCC BAA-1060).